A 542-amino-acid chain; its full sequence is Chaperonin GroEL 2 (542 aa).

ATP-binding positions include 30 to 33, lysine 51, 87 to 91, glycine 415, and aspartate 496; these read TLGP and DGTTT.

It belongs to the chaperonin (HSP60) family. Forms a cylinder of 14 subunits composed of two heptameric rings stacked back-to-back. Interacts with the co-chaperonin GroES.

Its subcellular location is the cytoplasm. The catalysed reaction is ATP + H2O + a folded polypeptide = ADP + phosphate + an unfolded polypeptide.. Its function is as follows. Together with its co-chaperonin GroES, plays an essential role in assisting protein folding. The GroEL-GroES system forms a nano-cage that allows encapsulation of the non-native substrate proteins and provides a physical environment optimized to promote and accelerate protein folding. The sequence is that of Chaperonin GroEL 2 from Sinorhizobium fredii (strain NBRC 101917 / NGR234).